Consider the following 294-residue polypeptide: Nucleotide-binding protein Dde_1774 (294 aa).

14-21 (GLSGAGKS) is an ATP binding site. GTP is bound at residue 66-69 (DLRQ).

Belongs to the RapZ-like family.

Functionally, displays ATPase and GTPase activities. In Oleidesulfovibrio alaskensis (strain ATCC BAA-1058 / DSM 17464 / G20) (Desulfovibrio alaskensis), this protein is Nucleotide-binding protein Dde_1774.